Consider the following 249-residue polypeptide: 2,3-bisphosphoglycerate-dependent phosphoglycerate mutase (249 aa).

Residues 9 to 16 (RHGQSQWN), 22 to 23 (TG), R61, 88 to 91 (ERHY), K99, 115 to 116 (RR), and 184 to 185 (GN) each bind substrate. Catalysis depends on H10, which acts as the Tele-phosphohistidine intermediate. E88 functions as the Proton donor/acceptor in the catalytic mechanism.

Belongs to the phosphoglycerate mutase family. BPG-dependent PGAM subfamily. In terms of assembly, homodimer.

The catalysed reaction is (2R)-2-phosphoglycerate = (2R)-3-phosphoglycerate. The protein operates within carbohydrate degradation; glycolysis; pyruvate from D-glyceraldehyde 3-phosphate: step 3/5. In terms of biological role, catalyzes the interconversion of 2-phosphoglycerate and 3-phosphoglycerate. This Xanthomonas campestris pv. campestris (strain 8004) protein is 2,3-bisphosphoglycerate-dependent phosphoglycerate mutase.